Consider the following 192-residue polypeptide: 3-hydroxyanthranilate 3,4-dioxygenase 1 (192 aa).

O2 is bound at residue R50. Residues H54, E60, and H102 each contribute to the Fe cation site. E60 provides a ligand contact to substrate. 2 residues coordinate substrate: R106 and E116. A divalent metal cation-binding residues include C131, C134, C168, and C171.

This sequence belongs to the 3-HAO family. Fe(2+) serves as cofactor.

Its subcellular location is the cytoplasm. It catalyses the reaction 3-hydroxyanthranilate + O2 = (2Z,4Z)-2-amino-3-carboxymuconate 6-semialdehyde. Its pathway is cofactor biosynthesis; NAD(+) biosynthesis; quinolinate from L-kynurenine: step 3/3. Its function is as follows. Catalyzes the oxidative ring opening of 3-hydroxyanthranilate to 2-amino-3-carboxymuconate semialdehyde, which spontaneously cyclizes to quinolinate. The polypeptide is 3-hydroxyanthranilate 3,4-dioxygenase 1 (bna1-1) (Aspergillus oryzae (strain ATCC 42149 / RIB 40) (Yellow koji mold)).